Consider the following 145-residue polypeptide: Leghemoglobin-2 (145 aa).

A Globin domain is found at 3 to 145; the sequence is AFSDKQEGLV…ELAAAIKKAY (143 aa). Residues Y26 and Y31 each carry the nitrated tyrosine modification. Position 46 (S46) interacts with heme b. S46 carries the post-translational modification Phosphoserine. H62 contributes to the O2 binding site. K65, H93, and K96 together coordinate heme b. Y134 bears the Nitrated tyrosine mark.

The protein belongs to the plant globin family. As to quaternary structure, monomer. Post-translationally, nitrated in effective nodules and particularly in hypoxic conditions; this mechanism may play a protective role in the symbiosis by buffering toxic peroxynitrite NO(2)(-). Nitration level decrease during nodule senescence. Phosphorylation at Ser-46 disrupts the molecular environment of its porphyrin ring oxygen binding pocket, thus leading to a reduced oxygen consumption and to the delivery of oxygen O(2) to symbiosomes. Root nodules.

It localises to the cytoplasm. The protein localises to the cytosol. Its subcellular location is the nucleus. Functionally, leghemoglobin that reversibly binds oxygen O(2) through a pentacoordinated heme iron. In root nodules, facilitates the diffusion of oxygen to the bacteroids while preventing the bacterial nitrogenase from being inactivated by buffering dioxygen, nitric oxide and carbon monoxide, and promoting the formation of reactive oxygen species (ROS, e.g. H(2)O(2)). This role is essential for symbiotic nitrogen fixation (SNF). This is Leghemoglobin-2 from Vigna unguiculata (Cowpea).